A 1012-amino-acid chain; its full sequence is Axonemal dynein light chain domain-containing protein 1 (1012 aa).

The segment covering 1-17 has biased composition (low complexity); it reads MSLPKTPSTPLNSTSTS. Residues 1-34 are disordered; that stretch reads MSLPKTPSTPLNSTSTSESKKLKVSVAKEGTRGL. 3 coiled-coil regions span residues 317 to 402, 447 to 486, and 572 to 597; these read QRIL…IWSS, EDLALLQKLTQKWRNLVNKLKQEVEQMEESTSETLKIVKD, and SERQYMEEIIKNIQKLYKEYEIRING. The span at 841–854 shows a compositional bias: acidic residues; it reads PEIDESFKEDEEES. Disordered regions lie at residues 841–879 and 963–1012; these read PEIDESFKEDEEESKEDRKLQEENKERAEEQPSTSTEKE and LEEL…KKGH. Basic and acidic residues-rich tracts occupy residues 855–879 and 963–987; these read KEDRKLQEENKERAEEQPSTSTEKE and LEELVMTSRKESKEEKENQDEREVK. Residues 988–997 are compositionally biased toward acidic residues; it reads EEEEQQEEEE.

As to expression, highly expressed in testis. Highly expressed in the round and late spermatids.

The protein localises to the cytoplasm. In terms of biological role, may be essential for spermiogenesis and male fertility probably by regulating the manchette dynamics, spermatid head shaping and sperm flagellum assembly. The protein is Axonemal dynein light chain domain-containing protein 1 of Homo sapiens (Human).